We begin with the raw amino-acid sequence, 827 residues long: MKERYDFKEIEEKWQARWAAQDLYAVPDYSDRPKYYCLEMFPYPSGKLHMGHVRNYSIGDVVARFKTMQGYHVLHPMGWDAFGLPAENAAIKHGGVHPAEWTLDNIESMRAQLKQLGISYDWNREVATCHPGYYRWTQWLFLQLFHNGLAYKKKAAVNWCPGCATVLANEQVKDGGCERCKAPVEKRELEQWFFKITDYAERLLKDLELLEGWPEKVKIMQENWIGRSEGAEIDFKVEGSDDIITVYTTRPDTVFGVTYMVLAPEHPLVEKLIAGSKQEAEIKEFIRKVRNLREIDRTSTEAEKVGMPTGAHCINPLTGEKVPVLIANYVLMEYGTGCVMGVPAHDQRDFEFARKYGYPIRVVIQPPGVELDPAAMEAAYEEEGFLVNSGPFSGMPNKEAIRAITRHLEEKGRGRFRVTYRLRDWLISRQRYWGAPIPIIYCDRCGTVPVPESDLPVLLPMDVEFKPTGQSPLAECPEFVNAACPSCGGPGKRETDTMDTFMCSSWYYYRYTSPRDNDAPWDRNKVDYWLPVDQYIGGVEHAILHLLYSRFFTKVLYDLKLVSNLEPFSNLLTQGMVLKDGAKMSKSRGNVVSPEDIVARYGADTARLFILFAAPPERDLEWSDQGVEGCYRFLNRVWRLVMPLAGLLKEAPAAVSGKLVGANREMRRVTHSTIKKVTEDISARFNFNTAVSAIMELVNALYQFREIPESDRNPAVLREAVESLLLLLAPFAPHITEELWEATGHRGSIHLQPWPSYDPEAIAEDEITIVVQINGRVRERLLVPAGITPQEMQDRVMKEPRVMRMVEGKKVAKVITVPGKLVNIVIK.

Residues 42–52 carry the 'HIGH' region motif; that stretch reads PYPSGKLHMGH. The 'KMSKS' region signature appears at 583–587; the sequence is KMSKS. Lysine 586 lines the ATP pocket.

This sequence belongs to the class-I aminoacyl-tRNA synthetase family.

It is found in the cytoplasm. It catalyses the reaction tRNA(Leu) + L-leucine + ATP = L-leucyl-tRNA(Leu) + AMP + diphosphate. This Pelotomaculum thermopropionicum (strain DSM 13744 / JCM 10971 / SI) protein is Leucine--tRNA ligase.